A 289-amino-acid polypeptide reads, in one-letter code: MAKRIVLFLLTNLAITFVLGIVLNIIFQVTGIQGGSTGGILVMSLVFGFAGSLISLFMSKSMALRSVGAEVIQQPRNHAEQWLFDTVQRQSQQANIPMPDIAIYHSADVNAFATGATKNNSLVAVSTGLLDNMTEDEAEAVVAHEIAHIANGDMVTMTLLQGVLNTFVIFLSRIISTAASSGKDENGNATQNTLVFWIVDIALQMIFGVIATMIAMWFSRYREYRADAGSAQLVGKEKMIAALQRLQHVHEPQEMQGSLAAFMINGARSKELFMSHPPLEKRIEALRNL.

A run of 2 helical transmembrane segments spans residues 7-27 (LFLL…NIIF) and 38-58 (GGIL…SLFM). Residue His144 coordinates Zn(2+). The active site involves Glu145. His148 contributes to the Zn(2+) binding site. A run of 2 helical transmembrane segments spans residues 155 to 175 (VTMT…SRII) and 194 to 214 (LVFW…ATMI). Residue Glu223 participates in Zn(2+) binding.

This sequence belongs to the peptidase M48B family. The cofactor is Zn(2+).

The protein resides in the cell inner membrane. The sequence is that of Protease HtpX from Actinobacillus pleuropneumoniae serotype 5b (strain L20).